The following is a 141-amino-acid chain: Mitochondrial import inner membrane translocase subunit Tim16 (141 aa).

2 disordered regions span residues 34 to 53 (AARR…SNLR) and 108 to 141 (LDHE…RQRR). A J-like region spans residues 60-113 (EAKQILNIDDPKNVDAITKNYEHLFQVNERSKGGSFYIQSKVFRAKERLDHEIK). A compositionally biased stretch (basic and acidic residues) spans 108-118 (LDHEIKAHEQP).

This sequence belongs to the TIM16/PAM16 family. As to quaternary structure, probable component of the PAM complex at least composed of a mitochondrial HSP70 protein, Roe1, TIM44, blp/TIM16 and TIM14. Associates with the TIM23 complex. In terms of tissue distribution, expressed in distinct cells in the embryonic and larval nervous system.

It localises to the mitochondrion inner membrane. Its function is as follows. Regulates ATP-dependent protein translocation into the mitochondrial matrix. Essential for larval development. This chain is Mitochondrial import inner membrane translocase subunit Tim16 (blp), found in Drosophila melanogaster (Fruit fly).